Reading from the N-terminus, the 437-residue chain is Sodium/bile acid cotransporter 4 (437 aa).

Over 1–103 the chain is Extracellular; that stretch reads MDGNDNVTLL…LPFWDTPLNH (103 aa). Residues asparagine 6, asparagine 18, and asparagine 24 are each glycosylated (N-linked (GlcNAc...) asparagine). Positions 37–82 are disordered; that stretch reads APASSAGPGPGLSLGPGPSFGFSPGPTPTPEPTTSGLAGGAASHGP. Residues 51–60 are compositionally biased toward low complexity; it reads GPGPSFGFSP. Residues 104 to 124 traverse the membrane as a helical segment; that stretch reads GLNVFVGAALCITMLGLGCTV. Residues 125 to 140 lie on the Cytoplasmic side of the membrane; that stretch reads DVNHFGAHVRRPVGAL. Residues 141-161 traverse the membrane as a helical segment; that stretch reads LAALCQFGLLPLLAFLLALAF. At 162 to 197 the chain is on the extracellular side; that stretch reads KLDEVAAVAVLLCGCCPGGNLSNLMSLLVDGDMNLS. N-linked (GlcNAc...) asparagine glycans are attached at residues asparagine 181 and asparagine 195. The chain crosses the membrane as a helical span at residues 198-218; sequence IIMTISSTLLALVLMPLCLWI. Over 219–233 the chain is Cytoplasmic; it reads YSWAWINTPIVQLLP. The chain crosses the membrane as a helical span at residues 234-254; it reads LGTVTLTLCSTLIPIGLGVFI. At 255–267 the chain is on the extracellular side; it reads RYKYSRVADYIVK. A helical transmembrane segment spans residues 268-288; that stretch reads VSLWSLLVTLVVLFIMTGTML. Over 289–291 the chain is Cytoplasmic; sequence GPE. A helical membrane pass occupies residues 292-312; that stretch reads LLASIPAAVYVIAIFMPLAGY. Residues 313-360 are Extracellular-facing; it reads ASGYGLATLFHLPPNCKRTVCLETGSQNVQLCTAILKLAFPPQFIGSM. Residues 361–381 traverse the membrane as a helical segment; that stretch reads YMFPLLYALFQSAEAGIFVLI. Residues 382 to 437 lie on the Cytoplasmic side of the membrane; it reads YKMYGSEMLHKRDPLDEDEDTDISYKKLKEEEMADTSYGTVKAENIIMMETAQTSL.

The protein belongs to the bile acid:sodium symporter (BASS) (TC 2.A.28) family. In terms of processing, activated following N-terminal proteolytic cleavage by thrombin and/or proteases. Highly expressed in brain and small intestine, and moderately expressed in colon, heart, prostate, and testis. Very low levels were detected in kidney, liver, ovary, placenta, spleen, and thymus.

Its subcellular location is the cell membrane. Its function is as follows. Transporter for bile acids. This is Sodium/bile acid cotransporter 4 (SLC10A4) from Homo sapiens (Human).